Reading from the N-terminus, the 692-residue chain is DNA ligase (692 aa).

Residues 34 to 38, 83 to 84, and Glu-124 each bind NAD(+); these read DAEYD and SL. Catalysis depends on Lys-126, which acts as the N6-AMP-lysine intermediate. Residues Arg-147, Glu-193, Lys-310, and Lys-334 each contribute to the NAD(+) site. The Zn(2+) site is built by Cys-428, Cys-431, Cys-446, and Cys-452. The BRCT domain maps to 612 to 692; it reads AGVAGVSGKT…ALLALLAGNA (81 aa).

This sequence belongs to the NAD-dependent DNA ligase family. LigA subfamily. Mg(2+) is required as a cofactor. Requires Mn(2+) as cofactor.

The enzyme catalyses NAD(+) + (deoxyribonucleotide)n-3'-hydroxyl + 5'-phospho-(deoxyribonucleotide)m = (deoxyribonucleotide)n+m + AMP + beta-nicotinamide D-nucleotide.. Its function is as follows. DNA ligase that catalyzes the formation of phosphodiester linkages between 5'-phosphoryl and 3'-hydroxyl groups in double-stranded DNA using NAD as a coenzyme and as the energy source for the reaction. It is essential for DNA replication and repair of damaged DNA. This chain is DNA ligase, found in Laribacter hongkongensis (strain HLHK9).